Here is a 224-residue protein sequence, read N- to C-terminus: 7-cyano-7-deazaguanine synthase (224 aa).

12–22 is a binding site for ATP; sequence LSGGLDSSTVT. Zn(2+) is bound by residues Cys193, Cys201, Cys204, and Cys207.

Belongs to the QueC family. Zn(2+) serves as cofactor.

The catalysed reaction is 7-carboxy-7-deazaguanine + NH4(+) + ATP = 7-cyano-7-deazaguanine + ADP + phosphate + H2O + H(+). It functions in the pathway purine metabolism; 7-cyano-7-deazaguanine biosynthesis. Catalyzes the ATP-dependent conversion of 7-carboxy-7-deazaguanine (CDG) to 7-cyano-7-deazaguanine (preQ(0)). The protein is 7-cyano-7-deazaguanine synthase of Prochlorococcus marinus (strain MIT 9312).